The primary structure comprises 186 residues: Serine hydrolase RBBP9 (186 aa).

The interval 63–67 (LHCDE) is involved in binding to RB1. Catalysis depends on charge relay system residues Ser75, Asp138, and His165.

It belongs to the RBBP9 family. Interacts with RB1; the interaction disrupts RB1 binding to E2F1. Interacts with RBL1 and RBL2. In terms of tissue distribution, highly expressed in the spleen, testis and kidney. Also found in the heart, liver, lung and brain.

It carries out the reaction valacyclovir + H2O = acyclovir + L-valine + H(+). Functionally, serine hydrolase. Catalyzes the hydrolytic activation of amino acid ester of the antiviral prodrug valacyclovir to its corresponding active drug, acyclovir. May negatively regulate basal or autocrine TGF-beta signaling by suppressing SMAD2-SMAD3 phosphorylation. May play a role in the transformation process due to its capacity to confer resistance to the growth-inhibitory effects of TGF-beta through interaction with RB1 and the subsequent displacement of E2F1. The sequence is that of Serine hydrolase RBBP9 from Rattus norvegicus (Rat).